We begin with the raw amino-acid sequence, 441 residues long: 3-oxo-glucose-6-phosphate:glutamate aminotransferase (441 aa).

98 to 99 (TS) serves as a coordination point for substrate. Position 125 to 126 (125 to 126 (GT)) interacts with pyridoxal 5'-phosphate. A substrate-binding site is contributed by Phe151. Positions 225 and 242 each coordinate pyridoxal 5'-phosphate. 244-246 (NPY) serves as a coordination point for substrate. Lys247 is subject to N6-(pyridoxal phosphate)lysine. The substrate site is built by Tyr274 and Lys282. Asn292 is a pyridoxal 5'-phosphate binding site. Tyr379 is a binding site for substrate.

It belongs to the DegT/DnrJ/EryC1 family. As to quaternary structure, homodimer. Pyridoxal 5'-phosphate serves as cofactor.

It catalyses the reaction 3-dehydro-D-glucose 6-phosphate + L-glutamate = D-kanosamine 6-phosphate + 2-oxoglutarate. It functions in the pathway antibiotic biosynthesis; kanosamine biosynthesis. Functionally, involved in the biosynthesis of kanosamine (3-amino-3-deoxy-D-glucose), which is known to have antibiotic and antifungal properties, and to be a precursor of the antibiotic neotrehalosadiamine (3,3'-diamino-3,3'-dideoxy-alpha,beta-trehalose (NTD)). Catalyzes the reversible pyridoxal phosphate-dependent transamination of 3-dehydro-alpha-D-glucose 6-phosphate to form alpha-D-kanosamine-6-phosphate. It can only use alpha-anomer and glutamate is the only amino donor. In Bacillus subtilis (strain 168), this protein is 3-oxo-glucose-6-phosphate:glutamate aminotransferase (ntdA).